The sequence spans 965 residues: MTISQNPALDTFEGLFNEAEFVYRHLGSNDAKQADLLSAIGYSDMATFINETVPEPVRLHKELDLPVAMSEHAALAKLRTMADDITVNKSYIGQGYSPVRMPAVIQRNVLENPGWYTAYTPYQAEIAQGRLEALLNFQQVCIDLTGLELAGASLLDEATAAAEAMAMSKRVSKSKSMQFFVDDRVYPQTLDVINTRAKYFGWEVVVGDFELAKSGDYFGALFQYVGVEGDVKDLTDVIAAVKKNKTYVSVVSDIMSLVLLKSPADMGADVALGSTQRFGIPMGFGGPHAAYFAFSDKAKRSAPGRIIGVSKDSQGNTALRMALQTREQHIRREKANSNICTSQVLLANLAGMYAVYHGPGGVKRIATRIHAFATAFADVIKNANDSNLNVLHDQFFDSVVVDCGSEKLASQIFQNADNVGYNLWRLGETKLSVAFSETSDQKDFNVLTQLFVTKAHDLPEDARVSLDSAHLRTDAILSHPVFNSHHTEHEMLRYLKSLEDKDLAMNRSMISLGSCTMKLNATSEMLPITWPEFANVHPFAPRDQVTGYVAMIDSLQEQLKAITGFDDVSMQPNSGASGEYAGLLAIRRYHESLGETDRDVCLIPMSAHGTNPATAMMMGMKVVVVKTDDNGNVDIDDLTAKSEEHSTRLGALMITYPSTHGVFEEGIRKICDLIHKHGGQVYMDGANMNAQVGMMQPADVGADVLHMNLHKTFCIPHGGGGPGMGPIGMKAHLAPFMANHTLSPVHNAQKDCSAVSAAPYGSASILPISWMYIAMMGRDGLLKATELALLNANYVAAELKDHYPVLYTGKNGRVAHECIIDIRPLKEETGISESDIAKRLMDYGFHSPTMSFPVAGTLMIEPTESESKEELDRFISALKSIKAEALKAKAGEDNWTLENNPLVNAPHTAAMVIDGEWTYPYSRETAAFPLPYIRTNKFWPSVARVDDAYGDKNLMCSCPSIENYM.

Lys-711 is modified (N6-(pyridoxal phosphate)lysine).

It belongs to the GcvP family. As to quaternary structure, the glycine cleavage system is composed of four proteins: P, T, L and H. The cofactor is pyridoxal 5'-phosphate.

The enzyme catalyses N(6)-[(R)-lipoyl]-L-lysyl-[glycine-cleavage complex H protein] + glycine + H(+) = N(6)-[(R)-S(8)-aminomethyldihydrolipoyl]-L-lysyl-[glycine-cleavage complex H protein] + CO2. The glycine cleavage system catalyzes the degradation of glycine. The P protein binds the alpha-amino group of glycine through its pyridoxal phosphate cofactor; CO(2) is released and the remaining methylamine moiety is then transferred to the lipoamide cofactor of the H protein. The polypeptide is Glycine dehydrogenase (decarboxylating) (Psychrobacter cryohalolentis (strain ATCC BAA-1226 / DSM 17306 / VKM B-2378 / K5)).